The following is a 439-amino-acid chain: Dihydroorotase (439 aa).

Zn(2+)-binding residues include His65 and His67. Substrate-binding positions include 67–69 (HFR) and Asn99. Zn(2+) contacts are provided by Asp156, His183, His246, and Asp321. Asp321 is a catalytic residue. Substrate contacts are provided by residues His325 and 339–340 (FG).

It belongs to the metallo-dependent hydrolases superfamily. DHOase family. Class I DHOase subfamily. Zn(2+) is required as a cofactor.

The enzyme catalyses (S)-dihydroorotate + H2O = N-carbamoyl-L-aspartate + H(+). It functions in the pathway pyrimidine metabolism; UMP biosynthesis via de novo pathway; (S)-dihydroorotate from bicarbonate: step 3/3. Catalyzes the reversible cyclization of carbamoyl aspartate to dihydroorotate. This is Dihydroorotase from Chlorobaculum tepidum (strain ATCC 49652 / DSM 12025 / NBRC 103806 / TLS) (Chlorobium tepidum).